We begin with the raw amino-acid sequence, 245 residues long: NADH-quinone oxidoreductase subunit C (245 aa).

Positions 1–10 (MSAPQDRTDD) are enriched in basic and acidic residues. 2 disordered regions span residues 1 to 54 (MSAP…GYGG) and 216 to 245 (PQRK…RSYQ). Residues 11–28 (GGVPVPVTPAGATGGAPA) are compositionally biased toward low complexity. The segment covering 39 to 54 (GMFGDQGTGDVSGYGG) has biased composition (gly residues).

Belongs to the complex I 30 kDa subunit family. In terms of assembly, NDH-1 is composed of 14 different subunits. Subunits NuoB, C, D, E, F, and G constitute the peripheral sector of the complex.

It is found in the cell membrane. It carries out the reaction a quinone + NADH + 5 H(+)(in) = a quinol + NAD(+) + 4 H(+)(out). Functionally, NDH-1 shuttles electrons from NADH, via FMN and iron-sulfur (Fe-S) centers, to quinones in the respiratory chain. The immediate electron acceptor for the enzyme in this species is believed to be a menaquinone. Couples the redox reaction to proton translocation (for every two electrons transferred, four hydrogen ions are translocated across the cytoplasmic membrane), and thus conserves the redox energy in a proton gradient. In Salinispora tropica (strain ATCC BAA-916 / DSM 44818 / JCM 13857 / NBRC 105044 / CNB-440), this protein is NADH-quinone oxidoreductase subunit C.